A 24-amino-acid chain; its full sequence is Brevinin-1PTa (24 aa).

Cysteines 18 and 24 form a disulfide.

In terms of tissue distribution, expressed by the skin glands.

The protein localises to the secreted. In terms of biological role, has antibacterial activity against the Gram-positive bacterium S.aureus ATCC 25923 (MIC=3 uM) and the Gram-negative bacterium E.coli ATCC 25726 (MIC=24 uM). In Pulchrana picturata (Malaysian fire frog), this protein is Brevinin-1PTa.